Here is a 320-residue protein sequence, read N- to C-terminus: Ferrochelatase (320 aa).

Residues histidine 194 and glutamate 275 each contribute to the Fe cation site.

This sequence belongs to the ferrochelatase family.

It localises to the cytoplasm. The enzyme catalyses heme b + 2 H(+) = protoporphyrin IX + Fe(2+). It participates in porphyrin-containing compound metabolism; protoheme biosynthesis; protoheme from protoporphyrin-IX: step 1/1. In terms of biological role, catalyzes the ferrous insertion into protoporphyrin IX. This is Ferrochelatase from Enterobacter sp. (strain 638).